The chain runs to 365 residues: D-alanine--D-alanine ligase (365 aa).

One can recognise an ATP-grasp domain in the interval 135–345 (KLLLKSFNIP…YGSLVDKLIA (211 aa)). 168–223 (KQSLDYPVIVKPAMLGSSIGISIAYNETQIEKCIEEAFAYDLTVVIEKFMRAREIE) serves as a coordination point for ATP. The Mg(2+) site is built by aspartate 298, glutamate 312, and asparagine 314.

The protein belongs to the D-alanine--D-alanine ligase family. Mg(2+) is required as a cofactor. Requires Mn(2+) as cofactor.

The protein localises to the cytoplasm. The catalysed reaction is 2 D-alanine + ATP = D-alanyl-D-alanine + ADP + phosphate + H(+). It participates in cell wall biogenesis; peptidoglycan biosynthesis. Functionally, cell wall formation. This Borrelia turicatae (strain 91E135) protein is D-alanine--D-alanine ligase.